Reading from the N-terminus, the 173-residue chain is Adenine phosphoribosyltransferase (173 aa).

The protein belongs to the purine/pyrimidine phosphoribosyltransferase family. In terms of assembly, homodimer.

The protein resides in the cytoplasm. It catalyses the reaction AMP + diphosphate = 5-phospho-alpha-D-ribose 1-diphosphate + adenine. Its pathway is purine metabolism; AMP biosynthesis via salvage pathway; AMP from adenine: step 1/1. Its function is as follows. Catalyzes a salvage reaction resulting in the formation of AMP, that is energically less costly than de novo synthesis. The sequence is that of Adenine phosphoribosyltransferase from Chloroflexus aurantiacus (strain ATCC 29366 / DSM 635 / J-10-fl).